The following is a 698-amino-acid chain: MARLVAVCRDGEEEFPFEKRQIPLYIDDTLTMVMEFPDNVLNLDGHQNNGAQLKQFIQRHSMLKQQDLNIAMMVTSREVLSALSQLVPCVGCRRSVERLFSQLVESGNPALEPLAVGPKGVLSVTRSCMTDAKKLYTLFYVHGSKLNDMIDAIPKSKKNKRCQLHSLDTHKPKPLGGCWMDVWELMSQECRDEVVLIDSSCLLETLETYLRKHRFCTDCKNKVLRAYNILIGELDCSKEKGYCAALYEGLRCCPHERHIHVCCETDFIAHLLGRAEPEFAGGRRERHAKTIDIAQEEVLTCLGIHLYERLHRIWQKLRAEEQTWQMLFYLGVDALRKSFEMAVEKVQGISRLEQLCEEFSEEERVRELKQEKKRQKRKNRRKNKCVCEIPTPLQAAEEKEINQAKENLDFTENSCKACGSTEEANNCVEVIVTNESTSCTCPSSGTLLGSPKIKKGLSPHCNGSDCGYSSSMEGSETGSREGSDVACTEGICNHDENGDDSCVHRCDDKEEDGDSCVECWANSEESNTKGKNKKKKKKSKTLKCENEHIQKLGSCMADPGNRETSGNTTHTEFHRDKTKDTHAESCCSSEKSGQQLPWFEHMKNVSQFAEPTEMSLVPDTGKGAKSLVELLDESECTSDEEIFISQDEIQSFMANNKSFYSNREQYRQHLKEKFNKYCRLNDHKRPICNGWLTTAGAN.

The disordered stretch occupies residues 555–575 (CMADPGNRETSGNTTHTEFHR).

Its subcellular location is the cytoplasm. May be involved in spermatogenesis. The chain is Gametogenetin-binding protein 2 (GGNBP2) from Gallus gallus (Chicken).